The following is a 420-amino-acid chain: Histidine--tRNA ligase (420 aa).

It belongs to the class-II aminoacyl-tRNA synthetase family. In terms of assembly, homodimer.

Its subcellular location is the cytoplasm. The catalysed reaction is tRNA(His) + L-histidine + ATP = L-histidyl-tRNA(His) + AMP + diphosphate + H(+). The protein is Histidine--tRNA ligase of Saccharopolyspora erythraea (strain ATCC 11635 / DSM 40517 / JCM 4748 / NBRC 13426 / NCIMB 8594 / NRRL 2338).